Here is a 146-residue protein sequence, read N- to C-terminus: Small ribosomal subunit protein bS6 (146 aa).

The disordered stretch occupies residues 106-146; sequence QAAATQRAAERRAQREAERNAAQAQSSASNQARTAATTSGK. A compositionally biased stretch (basic and acidic residues) spans 113–124; the sequence is AAERRAQREAER. The span at 125-146 shows a compositional bias: low complexity; the sequence is NAAQAQSSASNQARTAATTSGK.

This sequence belongs to the bacterial ribosomal protein bS6 family.

Functionally, binds together with bS18 to 16S ribosomal RNA. This Oenococcus oeni (strain ATCC BAA-331 / PSU-1) protein is Small ribosomal subunit protein bS6.